The primary structure comprises 188 residues: Ribosome-recycling factor (188 aa).

The protein belongs to the RRF family.

It is found in the cytoplasm. Its function is as follows. Responsible for the release of ribosomes from messenger RNA at the termination of protein biosynthesis. May increase the efficiency of translation by recycling ribosomes from one round of translation to another. This is Ribosome-recycling factor from Acidiphilium cryptum (strain JF-5).